Here is a 517-residue protein sequence, read N- to C-terminus: General transcription factor IIF subunit 1 (517 aa).

Alanine 2 is subject to N-acetylalanine. Residue threonine 156 is modified to Phosphothreonine. Residues 178–458 (QQRRLKDQDQ…SGDVQVTEDA (281 aa)) are disordered. The span at 210-225 (LEDDLEMSSDDSEASG) shows a compositional bias: acidic residues. Residues serine 217, serine 218, serine 221, and serine 224 each carry the phosphoserine modification. Positions 232–251 (PKAKKKAPPSKGGRKKKKKK) are enriched in basic residues. 2 stretches are compositionally biased toward acidic residues: residues 255–270 (DEAF…EGQE) and 303–325 (EQSE…EEEE). Threonine 331 carries the phosphothreonine modification. The segment covering 343–355 (EESDSSEESDIDS) has biased composition (acidic residues). Basic residues predominate over residues 364–374 (AKKKTPPKRER). Phosphoserine occurs at positions 377, 380, 381, and 385. A compositionally biased stretch (low complexity) spans 377-391 (SGGSSRGNSRPGTPS). Residue threonine 389 is modified to Phosphothreonine. Serine 391 is subject to Phosphoserine. Residues 392-401 (TEAGSTSSTL) are compositionally biased toward polar residues. Position 407 is an N6-acetyllysine (lysine 407). The span at 428–452 (GPQSLSGKSTPQPQSGKSTPSSGDV) shows a compositional bias: polar residues. Serine 431, serine 433, and serine 436 each carry phosphoserine. A phosphothreonine mark is found at threonine 437 and threonine 446. Serine 449 is subject to Phosphoserine.

Belongs to the TFIIF alpha subunit family. Heterodimer of an alpha and a beta subunit. Interacts with GTF2F2, CTDP1, TAF6/TAFII80 and URI1. Interacts with GTF2B (via C-terminus and preferentially via acetylated form); this interaction prevents binding of GTF2B to GTF2F2. Part of TBP-based Pol II pre-initiation complex (PIC), in which Pol II core assembles with general transcription factors and other specific initiation factors including GTF2E1, GTF2E2, GTF2F1, GTF2F2, TCEA1, ERCC2, ERCC3, GTF2H2, GTF2H3, GTF2H4, GTF2H5, GTF2A1, GTF2A2, GTF2B and TBP; this large multi-subunit PIC complex mediates DNA unwinding and targets Pol II core to the transcription start site where the first phosphodiester bond forms. In terms of processing, phosphorylated on Ser and other residues by TAF1 and casein kinase II-like kinases.

It localises to the nucleus. TFIIF is a general transcription initiation factor that binds to RNA polymerase II and helps to recruit it to the initiation complex in collaboration with TFIIB. It promotes transcription elongation. The protein is General transcription factor IIF subunit 1 (GTF2F1) of Bos taurus (Bovine).